The following is a 212-amino-acid chain: Elongation factor Ts (212 aa).

An involved in Mg(2+) ion dislocation from EF-Tu region spans residues 82-85 (SDFV).

This sequence belongs to the EF-Ts family.

It localises to the cytoplasm. Functionally, associates with the EF-Tu.GDP complex and induces the exchange of GDP to GTP. It remains bound to the aminoacyl-tRNA.EF-Tu.GTP complex up to the GTP hydrolysis stage on the ribosome. This Solibacter usitatus (strain Ellin6076) protein is Elongation factor Ts.